The sequence spans 120 residues: Flagellar protein FliT (120 aa).

The interval methionine 1–isoleucine 50 is required for homodimerization. The tract at residues valine 60–asparagine 98 is fliD binding.

It belongs to the FliT family. In terms of assembly, homodimer. Interacts with FliD and FlhC.

Its subcellular location is the cytoplasm. It localises to the cytosol. Dual-function protein that regulates the transcription of class 2 flagellar operons and that also acts as an export chaperone for the filament-capping protein FliD. As a transcriptional regulator, acts as an anti-FlhDC factor; it directly binds FlhC, thus inhibiting the binding of the FlhC/FlhD complex to class 2 promoters, resulting in decreased expression of class 2 flagellar operons. As a chaperone, effects FliD transition to the membrane by preventing its premature polymerization, and by directing it to the export apparatus. This Dickeya chrysanthemi (Pectobacterium chrysanthemi) protein is Flagellar protein FliT.